The sequence spans 465 residues: Lactaldehyde dehydrogenase (465 aa).

Position 220 to 225 (220 to 225 (GSVEIG)) interacts with NAD(+). Catalysis depends on residues Glu240 and Cys274.

Belongs to the aldehyde dehydrogenase family. Homotetramer.

It catalyses the reaction (S)-lactaldehyde + NAD(+) + H2O = (S)-lactate + NADH + 2 H(+). It functions in the pathway cofactor biosynthesis; coenzyme F420 biosynthesis. In terms of biological role, involved in F420 biosynthesis through the oxidation of lactaldehyde to lactate. The protein is Lactaldehyde dehydrogenase of Methanococcus maripaludis (strain C7 / ATCC BAA-1331).